The sequence spans 469 residues: Putative multidrug resistance protein MdtD (469 aa).

Helical transmembrane passes span 8-28, 45-65, 68-88, 102-122, 134-154, 161-181, 191-211, 215-235, 263-283, 286-306, 338-358, 392-412, and 426-446; these read LWIV…VNTA, SVIV…GWLA, VGVK…SLLC, VIQG…VMKI, FVTL…GFLV, WIFL…LWLM, FDIS…LALD, GLGL…LALA, LIGS…TPVF, IGLG…IIGS, LSFP…VLFF, MVMQ…LGVF, and SAFL…ALIF.

The protein belongs to the major facilitator superfamily. TCR/Tet family.

Its subcellular location is the cell inner membrane. This chain is Putative multidrug resistance protein MdtD, found in Yersinia enterocolitica serotype O:8 / biotype 1B (strain NCTC 13174 / 8081).